We begin with the raw amino-acid sequence, 493 residues long: Aminotransferase swnA (493 aa).

This sequence belongs to the class-I pyridoxal-phosphate-dependent aminotransferase family. It depends on pyridoxal 5'-phosphate as a cofactor.

It participates in mycotoxin biosynthesis. In terms of biological role, aminotransferase; part of the gene cluster that mediates the biosynthesis of swainsonine (SW), a cytotoxic fungal alkaloid and a potential cancer therapy drug. Swainsonine production occurs via a multibranched pathway and is dispensable for fungal colonization of plants and infection of insect hosts. The first step of swainsonine biosynthesis is the production of the precursor pipecolic acid (PA) via conversion of L-lysine (Lys) to 1-piperideine-6-carboxylate (P6C) by the aminotransferase swnA, the latter being further reduced to PA by the reductase swnR. The PKS-NRPS hybrid synthetase swnK uptakes and condensates PA and malonyl-CoA with and without skipping of the ketoreductase (KR) domain in order to produce 3 intermediates, 1-oxoindolizidine, (1S)-1-hydroxyindolizin, and (1R)-1-hydroxyindolizine; with the transisomer (1S)-1-hydroxyindolizin being predominant. The terminal thioester reductase (TE) domain of swnK is involved in reduction of the thioester bond to release the intermediate aldehydes. The oxidoreductase swnN could contribute to the reduction of 1-oxoindolizidine to (1S)-1-hydroxyindolizin and (1R)-1-hydroxyindolizine, contributing to the major route of SW production. The dioxygenase swnH2 would be responsible for the oxidization of (1R)-1-hydroxyindolizine into (1R,2S)-1,2-dihydroxyindolizine and of (1S)-1-hydroxyindolizin to yield both (1R,2S)-1,2-dihydroxyindolizine and (1S,2S)-1,2-dihydroxyindolizine. The dioxygenase swnH1 then performs the conversion of the 1,2-dihydroxyindolizine epimers to SW. This chain is Aminotransferase swnA, found in Arthroderma benhamiae (strain ATCC MYA-4681 / CBS 112371) (Trichophyton mentagrophytes).